A 551-amino-acid chain; its full sequence is MDELLNVASHAATFATNFALKHSISFAGKLAVQQVSSYIKRASADDQSELESVKTQLLEMIRVVTPAIELIEIMSVGENENFKSTKQLVDSLHADIEQFTKHVLSAAHSEFPPSSEKETLQKNVDTSILREMKTLLLKINDAVPLLNLSITTSGASISSSLPKSTSFSQLLRANSYIYRANVAFTGNEPLQVGPTFFLRTYKIIDNHAKSGYISNDLVMWKEEMPVCIAKMFRMPPQRLKSKDTVLAYALSLKQSFDDDRYHDEDETPVTKTISLNDVRTLFFSLSGKLLRLDDVQTPVLLLKYADDETEYSSNTAPSNWIALEALPLVSIPNESLDESDELAESLSDSEAARLQLLGIKKQESVAKKKSSFPSTIKDQPNLTLLEYLIRLCALESTTQESVLQLPDEQIALYLKDYQGRERPRDPASYNALENRSELSASPGSVSSSRHSGIFATPTFLSPWNIKNIPLVTPEVSTRQTKNVDEEDSALLMASPSVRKSNLLPQEDLISKDSVIKLKENPSVIPHSEPESSSKVINCQAKLNVEKEKKNP.

In terms of domain architecture, RanBD1 spans 1–309 (MDELLNVASH…LLLKYADDET (309 aa)). Ser-441 bears the Phosphoserine mark. The tract at residues 522-551 (SVIPHSEPESSSKVINCQAKLNVEKEKKNP) is disordered.

Its subcellular location is the nucleus. In Schizosaccharomyces pombe (strain 972 / ATCC 24843) (Fission yeast), this protein is RanBD1 domain-containing protein C584.03c.